The chain runs to 275 residues: NH(3)-dependent NAD(+) synthetase (275 aa).

Position 50–57 (glycine 50–serine 57) interacts with ATP. Residue aspartate 56 coordinates Mg(2+). Arginine 147 is a binding site for deamido-NAD(+). Position 167 (threonine 167) interacts with ATP. Glutamate 172 contributes to the Mg(2+) binding site. Positions 180 and 187 each coordinate deamido-NAD(+). ATP-binding residues include lysine 196 and threonine 218. Residue histidine 267–lysine 268 coordinates deamido-NAD(+).

It belongs to the NAD synthetase family. In terms of assembly, homodimer.

The catalysed reaction is deamido-NAD(+) + NH4(+) + ATP = AMP + diphosphate + NAD(+) + H(+). Its pathway is cofactor biosynthesis; NAD(+) biosynthesis; NAD(+) from deamido-NAD(+) (ammonia route): step 1/1. In terms of biological role, catalyzes the ATP-dependent amidation of deamido-NAD to form NAD. Uses ammonia as a nitrogen source. In Pseudomonas syringae pv. tomato (strain ATCC BAA-871 / DC3000), this protein is NH(3)-dependent NAD(+) synthetase.